The primary structure comprises 179 residues: 6,7-dimethyl-8-ribityllumazine synthase (179 aa).

5-amino-6-(D-ribitylamino)uracil is bound by residues tryptophan 13, 45–47, and 68–70; these read AVE and VVI. Residue 73–74 participates in (2S)-2-hydroxy-3-oxobutyl phosphate binding; that stretch reads DT. The active-site Proton donor is the histidine 76. Position 101 (phenylalanine 101) interacts with 5-amino-6-(D-ribitylamino)uracil. Arginine 115 contributes to the (2S)-2-hydroxy-3-oxobutyl phosphate binding site. The tract at residues 157-179 is disordered; sequence AKAAKKPAKAAAKTQKKKKKVRK.

Belongs to the DMRL synthase family.

The catalysed reaction is (2S)-2-hydroxy-3-oxobutyl phosphate + 5-amino-6-(D-ribitylamino)uracil = 6,7-dimethyl-8-(1-D-ribityl)lumazine + phosphate + 2 H2O + H(+). It functions in the pathway cofactor biosynthesis; riboflavin biosynthesis; riboflavin from 2-hydroxy-3-oxobutyl phosphate and 5-amino-6-(D-ribitylamino)uracil: step 1/2. In terms of biological role, catalyzes the formation of 6,7-dimethyl-8-ribityllumazine by condensation of 5-amino-6-(D-ribitylamino)uracil with 3,4-dihydroxy-2-butanone 4-phosphate. This is the penultimate step in the biosynthesis of riboflavin. The polypeptide is 6,7-dimethyl-8-ribityllumazine synthase (Bdellovibrio bacteriovorus (strain ATCC 15356 / DSM 50701 / NCIMB 9529 / HD100)).